Consider the following 183-residue polypeptide: Protein Syd (183 aa).

It belongs to the Syd family.

Its subcellular location is the cell inner membrane. In terms of biological role, interacts with the SecY protein in vivo. May bind preferentially to an uncomplexed state of SecY, thus functioning either as a chelating agent for excess SecY in the cell or as a regulatory factor that negatively controls the translocase function. The chain is Protein Syd from Yersinia enterocolitica serotype O:8 / biotype 1B (strain NCTC 13174 / 8081).